Reading from the N-terminus, the 83-residue chain is uncharacterized protein (83 aa).

It belongs to the chlamydial CPn_0710/CT_666/TC_0037 family.

This is an uncharacterized protein from Chlamydia trachomatis serovar D (strain ATCC VR-885 / DSM 19411 / UW-3/Cx).